The primary structure comprises 35 residues: Photosystem II reaction center protein T (35 aa).

The chain crosses the membrane as a helical span at residues 3 to 23; the sequence is ALVYTFLLVGTLGIIFFAIFF.

The protein belongs to the PsbT family. As to quaternary structure, PSII is composed of 1 copy each of membrane proteins PsbA, PsbB, PsbC, PsbD, PsbE, PsbF, PsbH, PsbI, PsbJ, PsbK, PsbL, PsbM, PsbT, PsbY, PsbZ, Psb30/Ycf12, at least 3 peripheral proteins of the oxygen-evolving complex and a large number of cofactors. It forms dimeric complexes.

It is found in the plastid. The protein localises to the chloroplast thylakoid membrane. Functionally, found at the monomer-monomer interface of the photosystem II (PS II) dimer, plays a role in assembly and dimerization of PSII. PSII is a light-driven water plastoquinone oxidoreductase, using light energy to abstract electrons from H(2)O, generating a proton gradient subsequently used for ATP formation. The chain is Photosystem II reaction center protein T from Marchantia polymorpha (Common liverwort).